The sequence spans 228 residues: 6-carboxyhexanoate--CoA ligase (228 aa).

This sequence belongs to the BioW family. In terms of assembly, homodimer. Mg(2+) is required as a cofactor.

It catalyses the reaction heptanedioate + ATP + CoA = 6-carboxyhexanoyl-CoA + AMP + diphosphate. It participates in metabolic intermediate metabolism; pimeloyl-CoA biosynthesis; pimeloyl-CoA from pimelate: step 1/1. In terms of biological role, catalyzes the transformation of pimelate into pimeloyl-CoA with concomitant hydrolysis of ATP to AMP. The polypeptide is 6-carboxyhexanoate--CoA ligase (Staphylococcus epidermidis (strain ATCC 12228 / FDA PCI 1200)).